Here is a 620-residue protein sequence, read N- to C-terminus: Membralin (620 aa).

A disordered region spans residues 1-33 (MSEHVEPAAPGPGPNGGGGGPAPARGPRTPNLN). Position 2 is an N-acetylserine (serine 2). A compositionally biased stretch (low complexity) spans 22–31 (APARGPRTPN). Phosphothreonine is present on threonine 29. The chain crosses the membrane as a helical span at residues 70-90 (FFVLLKALFVLFVLAYIHIVF). Residue asparagine 189 is glycosylated (N-linked (GlcNAc...) asparagine). A run of 3 helical transmembrane segments spans residues 302 to 322 (TSYL…SMLL), 346 to 366 (IAFP…MEAI), and 426 to 446 (YSSL…IYFF). Disordered stretches follow at residues 474-517 (TPTA…GPVA) and 568-620 (SPLG…EVGS). Composition is skewed to low complexity over residues 499–517 (PPAL…GPVA) and 568–593 (SPLG…AASD).

It belongs to the membralin family. In terms of assembly, interacts with ERLIN2.

Its subcellular location is the endoplasmic reticulum membrane. In terms of biological role, may have a role in the ERAD pathway required for clearance of misfolded proteins in the endoplasmic reticulum (ER). Promotes survival of motor neurons, probably by protecting against ER stress. The protein is Membralin (TMEM259) of Homo sapiens (Human).